The chain runs to 311 residues: Ribosomal RNA small subunit methyltransferase A (311 aa).

S-adenosyl-L-methionine contacts are provided by N29, V31, G56, E77, D107, and N126.

Belongs to the class I-like SAM-binding methyltransferase superfamily. rRNA adenine N(6)-methyltransferase family. RsmA subfamily.

Its subcellular location is the cytoplasm. The enzyme catalyses adenosine(1518)/adenosine(1519) in 16S rRNA + 4 S-adenosyl-L-methionine = N(6)-dimethyladenosine(1518)/N(6)-dimethyladenosine(1519) in 16S rRNA + 4 S-adenosyl-L-homocysteine + 4 H(+). In terms of biological role, specifically dimethylates two adjacent adenosines (A1518 and A1519) in the loop of a conserved hairpin near the 3'-end of 16S rRNA in the 30S particle. May play a critical role in biogenesis of 30S subunits. The chain is Ribosomal RNA small subunit methyltransferase A from Mycolicibacterium vanbaalenii (strain DSM 7251 / JCM 13017 / BCRC 16820 / KCTC 9966 / NRRL B-24157 / PYR-1) (Mycobacterium vanbaalenii).